A 483-amino-acid polypeptide reads, in one-letter code: Myocilin (483 aa).

The first 18 residues, Met1–Ala18, serve as a signal peptide directing secretion. Residue Asn43 is glycosylated (N-linked (GlcNAc...) asparagine). Residues Gly51–Gly162 are a coiled coil. The interval Ser153–Arg179 is disordered. The Olfactomedin-like domain occupies Gly223–Lys482. An intrachain disulfide couples Cys224 to Cys412. Asp359, Asn407, Ala408, Ile456, and Asp457 together coordinate Ca(2+). The Microbody targeting signal signature appears at Ser481–Met483.

In terms of assembly, homodimer (via N-terminus). Can also form higher oligomers. Interacts with OLFM3, FN1, NRCAM, GLDN and NFASC. Interacts (via N-terminus) with MYL2. Interacts with SFRP1, FRZB, FZD7, FZD10, FZD1 and WIF1; regulates Wnt signaling. Interacts with SNTA1; regulates muscle hypertrophy. Interacts with ERBB2 and ERBB3; activates ERBB2-ERBB3 signaling pathway. Interacts with SNCG; affects its secretion and its aggregation. N-glycosylated. Post-translationally, palmitoylated. In terms of processing, undergoes a calcium-dependent proteolytic cleavage at Arg-205 by CAPN2 in the endoplasmic reticulum. The result is the production of two fragments, one of 35 kDa containing the C-terminal olfactomedin-like domain, and another of 20 kDa containing the N-terminal leucine zipper-like domain. Expressed in optic nerve head, ciliary body and retina.

It localises to the secreted. The protein localises to the golgi apparatus. The protein resides in the cytoplasmic vesicle. It is found in the extracellular space. Its subcellular location is the extracellular matrix. It localises to the extracellular exosome. The protein localises to the mitochondrion. The protein resides in the mitochondrion intermembrane space. It is found in the mitochondrion inner membrane. Its subcellular location is the mitochondrion outer membrane. It localises to the rough endoplasmic reticulum. The protein localises to the cell projection. The protein resides in the cilium. It is found in the endoplasmic reticulum. Secreted glycoprotein regulating the activation of different signaling pathways in adjacent cells to control different processes including cell adhesion, cell-matrix adhesion, cytoskeleton organization and cell migration. Promotes substrate adhesion, spreading and formation of focal contacts. Negatively regulates cell-matrix adhesion and stress fiber assembly through Rho protein signal transduction. Modulates the organization of actin cytoskeleton by stimulating the formation of stress fibers through interactions with components of Wnt signaling pathways. Promotes cell migration through activation of PTK2 and the downstream phosphatidylinositol 3-kinase signaling. Plays a role in bone formation and promotes osteoblast differentiation in a dose-dependent manner through mitogen-activated protein kinase signaling. Mediates myelination in the peripheral nervous system through ERBB2/ERBB3 signaling. Plays a role as a regulator of muscle hypertrophy through the components of dystrophin-associated protein complex. Involved in positive regulation of mitochondrial depolarization. Plays a role in neurite outgrowth. May participate in the obstruction of fluid outflow in the trabecular meshwork. In Canis lupus familiaris (Dog), this protein is Myocilin (MYOC).